The sequence spans 395 residues: Obg-like ATPase 1 (395 aa).

One can recognise an OBG-type G domain in the interval 22 to 280 (LKVGILGLPN…MPEDERQKYL (259 aa)). 31-36 (NVGKST) contacts ATP. Mg(2+)-binding residues include Ser-35 and Thr-55. Leu-228 provides a ligand contact to ATP. Residues 301 to 384 (QLEYFFTSGE…QDGDVIFFKF (84 aa)) form the TGS domain.

This sequence belongs to the TRAFAC class OBG-HflX-like GTPase superfamily. OBG GTPase family. YchF/OLA1 subfamily. Monomer. Mg(2+) serves as cofactor. Expressed in the nervous system, pharyngeal muscles and intestine (at protein level).

The protein resides in the cytoplasm. Hydrolyzes ATP, and can also hydrolyze GTP with lower efficiency. Has lower affinity for GTP. Plays a role in regulating starvation-induced thermotaxis responses in AFD thermosensory neurons. This is Obg-like ATPase 1 from Caenorhabditis elegans.